Consider the following 455-residue polypeptide: Protein king tubby (455 aa).

Positions Arg-35–Ser-92 are disordered. The span at Leu-67–Ser-92 shows a compositional bias: low complexity. Ser-144 is subject to Phosphoserine.

The protein belongs to the TUB family.

It localises to the cytoplasm. The protein localises to the nucleus. Its subcellular location is the cell projection. The protein resides in the cilium membrane. It is found in the rhabdomere. In Drosophila virilis (Fruit fly), this protein is Protein king tubby.